Here is a 301-residue protein sequence, read N- to C-terminus: Sulfate adenylyltransferase subunit 2 (301 aa).

Residues 279 to 301 (RQGRLIDRDEAGSMEKKKREGYF) form a disordered region.

This sequence belongs to the PAPS reductase family. CysD subfamily. As to quaternary structure, sulfate-activating enzymes, NodP and NodQ, may be physically associated.

The catalysed reaction is sulfate + ATP + H(+) = adenosine 5'-phosphosulfate + diphosphate. In terms of biological role, proposed to provide activated sulfate for transfer to nod factor. This is Sulfate adenylyltransferase subunit 2 (nodP) from Rhizobium sp. (strain N33).